A 106-amino-acid chain; its full sequence is Met repressor (106 aa).

Belongs to the MetJ family. As to quaternary structure, homodimer.

Its subcellular location is the cytoplasm. Its function is as follows. This regulatory protein, when combined with SAM (S-adenosylmethionine) represses the expression of the methionine regulon and of enzymes involved in SAM synthesis. In Vibrio campbellii (strain ATCC BAA-1116), this protein is Met repressor.